The primary structure comprises 76 residues: MLSLKKSMLLLFFLGMVSFSLANKRSDGKRADEEGEDKRADEEGEDKRADEEGEDKRKRFLPFLIPALTSLISSLG.

The signal sequence occupies residues 1 to 22 (MLSLKKSMLLLFFLGMVSFSLA). A propeptide spanning residues 23–55 (NKRSDGKRADEEGEDKRADEEGEDKRADEEGED) is cleaved from the precursor. The disordered stretch occupies residues 24-54 (KRSDGKRADEEGEDKRADEEGEDKRADEEGE). L75 carries the post-translational modification Leucine amide.

Expressed by the skin glands.

The protein resides in the secreted. Antimicrobial peptide with activity against the Gram-positive bacterium S.aureus NCTC 10788 (MIC=50 um) and the yeast C.albicans NCPF 1467 (MIC=150 uM). Ineffective against the Gram-negative bacterium E.coli NCTC 10418. Induces a dose-dependent contraction of rat urinary bladder smooth muscle (EC50=2.9 nM) and a dose-dependent relaxation of rat tail artery smooth muscle (EC50=37.7 nM). This chain is Senegalin, found in Kassina senegalensis (Senegal running frog).